A 675-amino-acid chain; its full sequence is DNA gyrase subunit B (675 aa).

The region spanning 453 to 567 (SELYVVEGDS…NGHVFLAQPP (115 aa)) is the Toprim domain. Residues glutamate 459, aspartate 532, and aspartate 534 each contribute to the Mg(2+) site.

The protein belongs to the type II topoisomerase GyrB family. As to quaternary structure, heterotetramer, composed of two GyrA and two GyrB chains. In the heterotetramer, GyrA contains the active site tyrosine that forms a transient covalent intermediate with DNA, while GyrB binds cofactors and catalyzes ATP hydrolysis. It depends on Mg(2+) as a cofactor. The cofactor is Mn(2+). Ca(2+) is required as a cofactor.

It localises to the cytoplasm. The catalysed reaction is ATP-dependent breakage, passage and rejoining of double-stranded DNA.. Its function is as follows. A type II topoisomerase that negatively supercoils closed circular double-stranded (ds) DNA in an ATP-dependent manner to modulate DNA topology and maintain chromosomes in an underwound state. Negative supercoiling favors strand separation, and DNA replication, transcription, recombination and repair, all of which involve strand separation. Also able to catalyze the interconversion of other topological isomers of dsDNA rings, including catenanes and knotted rings. Type II topoisomerases break and join 2 DNA strands simultaneously in an ATP-dependent manner. In Mycobacterium tuberculosis (strain ATCC 25177 / H37Ra), this protein is DNA gyrase subunit B.